The sequence spans 272 residues: SKA complex subunit 1 homolog (272 aa).

Residues 48–75 (ALSSMELQVQSIKDRLREETEAIPKAKK) adopt a coiled-coil conformation.

This sequence belongs to the SKA1 family.

This Arabidopsis thaliana (Mouse-ear cress) protein is SKA complex subunit 1 homolog.